We begin with the raw amino-acid sequence, 256 residues long: Ubiquinone/menaquinone biosynthesis C-methyltransferase UbiE (256 aa).

S-adenosyl-L-methionine is bound by residues Thr79, Asp100, and 128–129 (DA).

The protein belongs to the class I-like SAM-binding methyltransferase superfamily. MenG/UbiE family.

The enzyme catalyses a 2-demethylmenaquinol + S-adenosyl-L-methionine = a menaquinol + S-adenosyl-L-homocysteine + H(+). It catalyses the reaction a 2-methoxy-6-(all-trans-polyprenyl)benzene-1,4-diol + S-adenosyl-L-methionine = a 5-methoxy-2-methyl-3-(all-trans-polyprenyl)benzene-1,4-diol + S-adenosyl-L-homocysteine + H(+). The protein operates within quinol/quinone metabolism; menaquinone biosynthesis; menaquinol from 1,4-dihydroxy-2-naphthoate: step 2/2. It functions in the pathway cofactor biosynthesis; ubiquinone biosynthesis. Functionally, methyltransferase required for the conversion of demethylmenaquinol (DMKH2) to menaquinol (MKH2) and the conversion of 2-polyprenyl-6-methoxy-1,4-benzoquinol (DDMQH2) to 2-polyprenyl-3-methyl-6-methoxy-1,4-benzoquinol (DMQH2). The protein is Ubiquinone/menaquinone biosynthesis C-methyltransferase UbiE of Pseudomonas aeruginosa (strain LESB58).